A 308-amino-acid chain; its full sequence is MNHLTGLFGLPASTLVELLDLAAGYREGLNREPETFAPLLSNRRIALVFFENSTRTRFSFELAARHLGAGTLSFTAASSSVSKGETLSDTIRNLEAMKVDAFVLRHPSSGAADFVTSITNRPVINAGDGTHEHPTQALLDILTLRSYFGKIEGLKIMILGDILHSRVARSNILGLKTLGAEIAVCAPSTLLPGRIDQLGVQVFTNLDKALAWADAAIVLRLQLERATGGYIPSLEEYSAGYGLTDEKFDRLKRLMPVLHPGPINREIEISNMVADRIQPPGYSSSMLMEQVTNGVAVRMAVLHRLLAK.

Positions 55 and 56 each coordinate carbamoyl phosphate. Lys-83 is a binding site for L-aspartate. Arg-105, His-133, and Gln-136 together coordinate carbamoyl phosphate. Arg-166 and Arg-220 together coordinate L-aspartate. Residues Gly-261 and Pro-262 each contribute to the carbamoyl phosphate site.

The protein belongs to the aspartate/ornithine carbamoyltransferase superfamily. ATCase family. Heterododecamer (2C3:3R2) of six catalytic PyrB chains organized as two trimers (C3), and six regulatory PyrI chains organized as three dimers (R2).

The catalysed reaction is carbamoyl phosphate + L-aspartate = N-carbamoyl-L-aspartate + phosphate + H(+). It functions in the pathway pyrimidine metabolism; UMP biosynthesis via de novo pathway; (S)-dihydroorotate from bicarbonate: step 2/3. In terms of biological role, catalyzes the condensation of carbamoyl phosphate and aspartate to form carbamoyl aspartate and inorganic phosphate, the committed step in the de novo pyrimidine nucleotide biosynthesis pathway. The chain is Aspartate carbamoyltransferase catalytic subunit from Chlorobaculum parvum (strain DSM 263 / NCIMB 8327) (Chlorobium vibrioforme subsp. thiosulfatophilum).